Here is a 444-residue protein sequence, read N- to C-terminus: Glutamate-1-semialdehyde 2,1-aminomutase (444 aa).

K267 carries the N6-(pyridoxal phosphate)lysine modification.

Belongs to the class-III pyridoxal-phosphate-dependent aminotransferase family. HemL subfamily. Homodimer. Pyridoxal 5'-phosphate serves as cofactor.

Its subcellular location is the cytoplasm. It catalyses the reaction (S)-4-amino-5-oxopentanoate = 5-aminolevulinate. It participates in porphyrin-containing compound metabolism; protoporphyrin-IX biosynthesis; 5-aminolevulinate from L-glutamyl-tRNA(Glu): step 2/2. This Xylella fastidiosa (strain Temecula1 / ATCC 700964) protein is Glutamate-1-semialdehyde 2,1-aminomutase.